We begin with the raw amino-acid sequence, 331 residues long: Acyl-CoA desaturase 1 (331 aa).

Over 1 to 46 the chain is Cytoplasmic; the sequence is MTEVDDGCGGRLRGSVLLEDECDLKQECETPTHSLVQGRDPPVVVV. A helical transmembrane segment spans residues 47 to 67; the sequence is WRNVVLMSVLHTAAVYGLVLL. A substrate-binding site is contributed by Asn-49. The Lumenal segment spans residues 68–71; sequence PSAS. A helical membrane pass occupies residues 72-90; the sequence is AYTLLAFCFVSSALGITAG. Residues 91–189 lie on the Cytoplasmic side of the membrane; it reads AHRLWSHRSY…DRVVMFQRRF (99 aa). Fe cation is bound by residues His-92 and His-97. The Histidine box-1 motif lies at 92-97; the sequence is HRLWSH. Substrate is bound by residues Asn-120, Arg-127, and Asp-128. Fe cation contacts are provided by His-129, His-132, and His-133. The short motif at 129 to 133 is the Histidine box-2 element; it reads HRVHH. Lys-161 lines the substrate pocket. A helical transmembrane segment spans residues 190–209; it reads YKHSVVVMCFLIPAMLPWFL. Topologically, residues 210 to 213 are lumenal; sequence WAES. Residues 214–235 traverse the membrane as a helical segment; the sequence is LWVGYFVPVLLRYALVLNATWL. A substrate-binding site is contributed by Trp-234. Residues 236–331 lie on the Cytoplasmic side of the membrane; the sequence is VNSAAHMWGN…RTGDGSHRSG (96 aa). Residues His-241, His-270, His-273, and His-274 each coordinate Fe cation. The Histidine box-3 signature appears at 270 to 274; sequence HNYHH.

Belongs to the fatty acid desaturase type 1 family. Requires Fe(2+) as cofactor. In terms of tissue distribution, expression is highest in liver, followed by brain and intestine, and lowest in spleen. Also expressed in heart, gill and muscle.

The protein resides in the endoplasmic reticulum membrane. It catalyses the reaction octadecanoyl-CoA + 2 Fe(II)-[cytochrome b5] + O2 + 2 H(+) = (9Z)-octadecenoyl-CoA + 2 Fe(III)-[cytochrome b5] + 2 H2O. Its function is as follows. Stearoyl-CoA desaturase that utilizes O(2) and electrons from reduced cytochrome b5 to introduce the first double bond into saturated fatty acyl-CoA substrates. Catalyzes the insertion of a cis double bond at the delta-9 position into fatty acyl-CoA substrates including palmitoyl-CoA and stearoyl-CoA. Contributes to the biosynthesis of membrane phospholipids, cholesterol esters and triglycerides. The chain is Acyl-CoA desaturase 1 from Tachysurus fulvidraco (Yellow catfish).